The following is a 346-amino-acid chain: Putative D-alanine--D-lactate ligase (346 aa).

The ATP-grasp domain occupies 137–338 (YVVARSAGIA…LSEVIDRTLS (202 aa)). 163–216 (RLTYPVFVKPARSGSSFGVSKVCRPEDLATAVESARRYDTKVLIEAAVVGSEVG) is a binding site for ATP. Mg(2+) contacts are provided by D292, E305, and N307.

It belongs to the D-alanine--D-alanine ligase family. Mg(2+) serves as cofactor. Mn(2+) is required as a cofactor.

It localises to the cell membrane. In terms of biological role, required for resistance to glycopeptides antibiotics. D-Ala--D-Ala ligase of altered specificity which catalyzes ester bond formation between D-Ala and various D-hydroxy acids; producing a peptidoglycan which does not terminate by D-alanine but by D-lactate, thus preventing vancomycin binding. In Streptomyces coelicolor (strain ATCC BAA-471 / A3(2) / M145), this protein is Putative D-alanine--D-lactate ligase.